A 276-amino-acid polypeptide reads, in one-letter code: NH(3)-dependent NAD(+) synthetase (276 aa).

Gly-43–Ser-50 lines the ATP pocket. Asp-49 provides a ligand contact to Mg(2+). Arg-146 provides a ligand contact to deamido-NAD(+). Residue Thr-166 coordinates ATP. Glu-171 provides a ligand contact to Mg(2+). The deamido-NAD(+) site is built by Lys-179 and Asp-186. 2 residues coordinate ATP: Lys-195 and Thr-217. His-266–Lys-267 is a binding site for deamido-NAD(+).

It belongs to the NAD synthetase family. Homodimer.

The enzyme catalyses deamido-NAD(+) + NH4(+) + ATP = AMP + diphosphate + NAD(+) + H(+). The protein operates within cofactor biosynthesis; NAD(+) biosynthesis; NAD(+) from deamido-NAD(+) (ammonia route): step 1/1. Catalyzes the ATP-dependent amidation of deamido-NAD to form NAD. Uses ammonia as a nitrogen source. The chain is NH(3)-dependent NAD(+) synthetase from Shewanella baltica (strain OS185).